A 299-amino-acid polypeptide reads, in one-letter code: ATP phosphoribosyltransferase (299 aa).

Belongs to the ATP phosphoribosyltransferase family. Long subfamily. Requires Mg(2+) as cofactor.

The protein localises to the cytoplasm. It carries out the reaction 1-(5-phospho-beta-D-ribosyl)-ATP + diphosphate = 5-phospho-alpha-D-ribose 1-diphosphate + ATP. It participates in amino-acid biosynthesis; L-histidine biosynthesis; L-histidine from 5-phospho-alpha-D-ribose 1-diphosphate: step 1/9. With respect to regulation, feedback inhibited by histidine. Catalyzes the condensation of ATP and 5-phosphoribose 1-diphosphate to form N'-(5'-phosphoribosyl)-ATP (PR-ATP). Has a crucial role in the pathway because the rate of histidine biosynthesis seems to be controlled primarily by regulation of HisG enzymatic activity. The polypeptide is ATP phosphoribosyltransferase (Campylobacter jejuni subsp. jejuni serotype O:6 (strain 81116 / NCTC 11828)).